The following is a 163-amino-acid chain: MSTSQPDDSNNRIVAVTLDEESIGRSGPDIEHERAIAIYDLVEKNLFAPEGAGDGPFTLHIGITGSRLMFDIRREDGAPVITHLLSLSPFRRIVKDYFMICDSYYQAIRTATPDKIEAIDMGRRGIHDEGSRTLQERLSGKVRIDFETARRLFTLISVLHWKG.

The protein belongs to the UPF0262 family.

The sequence is that of UPF0262 protein RPD_4278 from Rhodopseudomonas palustris (strain BisB5).